Consider the following 54-residue polypeptide: Potassium channel toxin alpha-KTx 14.2 (54 aa).

The first 23 residues, 1–23, serve as a signal peptide directing secretion; the sequence is MKIFFAILLILAVCSMAIWTVNG. Disulfide bonds link C30/C46, C36/C51, and C40/C53.

Belongs to the short scorpion toxin superfamily. Potassium channel inhibitor family. Alpha-KTx 14 subfamily. As to expression, expressed by the venom gland.

It localises to the secreted. In terms of biological role, inhibits potassium channels. May be active towards small conductance calcium-activated potassium channels (KCNN, SK), and less active towards voltage-gated potassium channels (Kv/KCN). This is Potassium channel toxin alpha-KTx 14.2 from Olivierus martensii (Manchurian scorpion).